The sequence spans 322 residues: Aspartate carbamoyltransferase catalytic subunit (322 aa).

Residues Arg65 and Thr66 each coordinate carbamoyl phosphate. Residue Lys93 coordinates L-aspartate. Residues Arg115, His143, and Gln146 each contribute to the carbamoyl phosphate site. Residues Arg176 and Arg230 each coordinate L-aspartate. 2 residues coordinate carbamoyl phosphate: Gly271 and Pro272.

This sequence belongs to the aspartate/ornithine carbamoyltransferase superfamily. ATCase family. Heterododecamer (2C3:3R2) of six catalytic PyrB chains organized as two trimers (C3), and six regulatory PyrI chains organized as three dimers (R2).

The catalysed reaction is carbamoyl phosphate + L-aspartate = N-carbamoyl-L-aspartate + phosphate + H(+). It functions in the pathway pyrimidine metabolism; UMP biosynthesis via de novo pathway; (S)-dihydroorotate from bicarbonate: step 2/3. In terms of biological role, catalyzes the condensation of carbamoyl phosphate and aspartate to form carbamoyl aspartate and inorganic phosphate, the committed step in the de novo pyrimidine nucleotide biosynthesis pathway. The protein is Aspartate carbamoyltransferase catalytic subunit of Brucella canis (strain ATCC 23365 / NCTC 10854 / RM-666).